A 69-amino-acid chain; its full sequence is uncharacterized protein (69 aa).

A CHCH domain is found at 6–56; it reads SEECTPAKKKYDACFNDWYANKFLKGDLHNRDCDELFAEYKSCLLKALKTK. 2 consecutive short sequence motifs (cx9C motif) follow at residues 9-19 and 38-48; these read CTPAKKKYDAC and CDELFAEYKSC. 2 disulfide bridges follow: Cys-9–Cys-48 and Cys-19–Cys-38.

The protein belongs to the TRIAP1/MDM35 family.

This is an uncharacterized protein from Schizosaccharomyces pombe (strain 972 / ATCC 24843) (Fission yeast).